The sequence spans 394 residues: MNQCGTITAVFEFEIKQRDGRARTATFQTPRGAVTTPMFMPVGTQGTVKGISPQELLEIGSQMILANTYHLMLRPGEQLVKAHGGLPGFTAYPGPFLTDSGGFQVMSLGHMRKISEEGVVFKNHLDGSRVELTPERSIQVQEALGADVIMAFDECPPYPAERPYIEASLDRTVRWLERCHAVKTKDDQALFAIVQGGVHEDLRLKSLEATLPFATPGFAVGGLAVGESKEEMYPAVAFTAGRLPENKPRYLMGVGHPEDLVAGVALGIDMFDCVYPTRTGRFGYALTDDGRLNLNSSAPRTQLQPIDAECDCYACRHYTRAYLAHLLRAEEMLAPRMLSLHNLRYLHRLVERMRVAINGQQFHPWAADWSERYFHGNVPGWFTSAFERSTQSEI.

Aspartate 99 serves as the catalytic Proton acceptor. Substrate contacts are provided by residues 99–103 (DSGGF), aspartate 153, glutamine 195, and glycine 222. Positions 253 to 259 (GVGHPED) are RNA binding. Catalysis depends on aspartate 272, which acts as the Nucleophile. The RNA binding; important for wobble base 34 recognition stretch occupies residues 277–281 (TRTGR). Zn(2+) is bound by residues cysteine 310, cysteine 312, cysteine 315, and histidine 341.

This sequence belongs to the queuine tRNA-ribosyltransferase family. Homodimer. Within each dimer, one monomer is responsible for RNA recognition and catalysis, while the other monomer binds to the replacement base PreQ1. Requires Zn(2+) as cofactor.

The enzyme catalyses 7-aminomethyl-7-carbaguanine + guanosine(34) in tRNA = 7-aminomethyl-7-carbaguanosine(34) in tRNA + guanine. Its pathway is tRNA modification; tRNA-queuosine biosynthesis. In terms of biological role, catalyzes the base-exchange of a guanine (G) residue with the queuine precursor 7-aminomethyl-7-deazaguanine (PreQ1) at position 34 (anticodon wobble position) in tRNAs with GU(N) anticodons (tRNA-Asp, -Asn, -His and -Tyr). Catalysis occurs through a double-displacement mechanism. The nucleophile active site attacks the C1' of nucleotide 34 to detach the guanine base from the RNA, forming a covalent enzyme-RNA intermediate. The proton acceptor active site deprotonates the incoming PreQ1, allowing a nucleophilic attack on the C1' of the ribose to form the product. After dissociation, two additional enzymatic reactions on the tRNA convert PreQ1 to queuine (Q), resulting in the hypermodified nucleoside queuosine (7-(((4,5-cis-dihydroxy-2-cyclopenten-1-yl)amino)methyl)-7-deazaguanosine). This is Queuine tRNA-ribosyltransferase from Deinococcus radiodurans (strain ATCC 13939 / DSM 20539 / JCM 16871 / CCUG 27074 / LMG 4051 / NBRC 15346 / NCIMB 9279 / VKM B-1422 / R1).